A 216-amino-acid polypeptide reads, in one-letter code: Ribosomal RNA small subunit methyltransferase G (216 aa).

S-adenosyl-L-methionine contacts are provided by residues glycine 82, leucine 87, 135 to 136, and arginine 148; that span reads AE.

This sequence belongs to the methyltransferase superfamily. RNA methyltransferase RsmG family.

It localises to the cytoplasm. It catalyses the reaction guanosine(527) in 16S rRNA + S-adenosyl-L-methionine = N(7)-methylguanosine(527) in 16S rRNA + S-adenosyl-L-homocysteine. Specifically methylates the N7 position of guanine in position 527 of 16S rRNA. The sequence is that of Ribosomal RNA small subunit methyltransferase G from Caulobacter vibrioides (strain ATCC 19089 / CIP 103742 / CB 15) (Caulobacter crescentus).